The sequence spans 72 residues: ATP synthase subunit c (72 aa).

Helical transmembrane passes span 5–25 (LLAAGIAVLAGIGAGIGIGIA) and 51–71 (AGLSEATAIYGLVVSIILLFV).

Belongs to the ATPase C chain family. F-type ATPases have 2 components, F(1) - the catalytic core - and F(0) - the membrane proton channel. F(1) has five subunits: alpha(3), beta(3), gamma(1), delta(1), epsilon(1). F(0) has three main subunits: a(1), b(2) and c(10-14). The alpha and beta chains form an alternating ring which encloses part of the gamma chain. F(1) is attached to F(0) by a central stalk formed by the gamma and epsilon chains, while a peripheral stalk is formed by the delta and b chains.

The protein resides in the cell membrane. Its function is as follows. F(1)F(0) ATP synthase produces ATP from ADP in the presence of a proton or sodium gradient. F-type ATPases consist of two structural domains, F(1) containing the extramembraneous catalytic core and F(0) containing the membrane proton channel, linked together by a central stalk and a peripheral stalk. During catalysis, ATP synthesis in the catalytic domain of F(1) is coupled via a rotary mechanism of the central stalk subunits to proton translocation. In terms of biological role, key component of the F(0) channel; it plays a direct role in translocation across the membrane. A homomeric c-ring of between 10-14 subunits forms the central stalk rotor element with the F(1) delta and epsilon subunits. The sequence is that of ATP synthase subunit c from Clostridium perfringens (strain ATCC 13124 / DSM 756 / JCM 1290 / NCIMB 6125 / NCTC 8237 / Type A).